Consider the following 193-residue polypeptide: Biphenyl dioxygenase subunit beta (193 aa).

Belongs to the bacterial ring-hydroxylating dioxygenase beta subunit family. Heterohexamer consisting of 3 BphA1 subunits and 3 BphA2 subunits. A ferredoxin (BphA3) and a ferredoxin reductase (BphA4) must be present to obtain activity.

The catalysed reaction is biphenyl + NADH + O2 + H(+) = (2R,3S)-3-phenylcyclohexa-3,5-diene-1,2-diol + NAD(+). The protein operates within xenobiotic degradation; biphenyl degradation; 2-hydroxy-2,4-pentadienoate and benzoate from biphenyl: step 1/4. In terms of biological role, the beta subunit may be responsible for the substrate specificity of the enzyme. This chain is Biphenyl dioxygenase subunit beta (bphA2), found in Pseudomonas sp. (strain KKS102).